The chain runs to 2111 residues: Fatty acid synthase beta subunit aflB (2111 aa).

An acetyltransferase (AT) domain region spans residues 200–565 (IVTVFNGQGV…KAGTAARVIL (366 aa)). The segment at 618 to 863 (SRALGLPPVM…AIVDTPGVPD (246 aa)) is enoyl reductase (ER) domain. Residues 1195–1688 (GTKPSWRKAL…SPGETLLVDI (494 aa)) are dehydratase (DH) domain. Positions 1606 to 1708 (EMPTSSDQYA…IVVATARSES (103 aa)) constitute a MaoC-like domain. The tract at residues 1727–2091 (YLFTGQGSQK…FENVLAISES (365 aa)) is malonyl/palmitoyl transferase (MT/PT) domain.

The protein belongs to the fungal fatty acid synthetase subunit beta family. As to quaternary structure, [Alpha(6)beta(6)] hexamers of two multifunctional subunits (alpha and beta).

The catalysed reaction is acetyl-CoA + n malonyl-CoA + 2n NADPH + 4n H(+) = a long-chain-acyl-CoA + n CoA + n CO2 + 2n NADP(+).. It catalyses the reaction holo-[ACP] + acetyl-CoA = acetyl-[ACP] + CoA. It carries out the reaction holo-[ACP] + malonyl-CoA = malonyl-[ACP] + CoA. The enzyme catalyses a (3R)-hydroxyacyl-[ACP] = a (2E)-enoyl-[ACP] + H2O. The catalysed reaction is a 2,3-saturated acyl-[ACP] + NAD(+) = a (2E)-enoyl-[ACP] + NADH + H(+). It catalyses the reaction (9Z)-octadecenoyl-[ACP] + H2O = (9Z)-octadecenoate + holo-[ACP] + H(+). It participates in secondary metabolite biosynthesis. Fatty acid synthase beta subunit; part of the gene cluster that mediates the biosynthesis of aspercryptins, linear lipopeptides built from six amino acids including 2 highly unusual and nonproteogenic amino acids, 2-amino-octanoic acid (2aoa) and 2-amino-dodecanol (2adol). The core structure of aspercryptins is as follows: Ser/Ala-Thr-Ile/Val-2aoa-Asn-2adol. The first step of aspercryptin biosynthesis is the generation of the fatty acid precursors, octanoic and dodecanoic acids, by the FAS subunits atnF and atnM. The fatty acid precursors are likely transformed into the corresponding alpha-amino fatty acids in three steps. First, they are hydroxylated by the cytochrome P450 monooxygenase atnE, then oxidized to the corresponding alpha-keto acids by the NAD(P)-dependent oxidoreductase atnD, and finally converted to the alpha-amino fatty acids by the PLP-dependent aminotransferases atnH or atnJ. the alpha-amino fatty acids, 2-amino-octanoic and 2-amino-dodecanoic acids, are recognized, activated, and covalently tethered to the NRPS atnA by its fourth and sixth adenylation domains. The second module of atnA is the Thr module and contains an epimerase (E) domain responsible for the epimerization of Thr to D-allo-Thr. Additionally, despite atnA having only one epimerase domain, the first amino acid of aspercryptin A1 is D-Ser, suggesting that serine is either loaded directly as D-Ser on the first module or that the epimerase domain in the threonine module epimerizes both L-Ser and L-Thr. After condensation of the hexapeptide of aspercryptin, the C-terminal reductase (TE) domain might be involved in the reductive release and production of the aldehyde hexapeptide. Further reduction would generate aspercryptins. The variety of aspercryptins produced reflects the flexibility of the atnA NRPS, allowing incorporation of alanine instead of serine, valine for isoleucine, and a C10 fatty amino alcohol instead of the C12 version. AtnB seems to be involved in the selectivity for Ile versus Val by the third module. Moreover, type B, C and D aspercryptins have an additional N-terminal cichorine, acetyl and propionyl group respectively. The sequence is that of Fatty acid synthase beta subunit aflB from Emericella nidulans (strain FGSC A4 / ATCC 38163 / CBS 112.46 / NRRL 194 / M139) (Aspergillus nidulans).